We begin with the raw amino-acid sequence, 66 residues long: Large ribosomal subunit protein bL35 (66 aa).

This sequence belongs to the bacterial ribosomal protein bL35 family.

This is Large ribosomal subunit protein bL35 from Jannaschia sp. (strain CCS1).